A 452-amino-acid polypeptide reads, in one-letter code: GTPase Der (452 aa).

2 consecutive EngA-type G domains span residues 4–169 (PVVA…PPAA) and 177–352 (IKVA…ESHR). GTP-binding positions include 10–17 (GRPNVGKS), 57–61 (DTGGL), 120–123 (NKCE), 183–190 (GRPNVGKS), 230–234 (DTAGI), and 295–298 (NKWD). Positions 353–438 (RRVSTSVIND…PIRLIWRGKP (86 aa)) constitute a KH-like domain.

The protein belongs to the TRAFAC class TrmE-Era-EngA-EngB-Septin-like GTPase superfamily. EngA (Der) GTPase family. In terms of assembly, associates with the 50S ribosomal subunit.

GTPase that plays an essential role in the late steps of ribosome biogenesis. This chain is GTPase Der, found in Microcystis aeruginosa (strain NIES-843 / IAM M-2473).